Consider the following 386-residue polypeptide: S-adenosylmethionine synthase (386 aa).

Residue H16 participates in ATP binding. Position 18 (D18) interacts with Mg(2+). E44 contributes to the K(+) binding site. Residues E57 and Q100 each coordinate L-methionine. Residues 100-110 are flexible loop; it reads QSRDIAQGVDR. ATP is bound by residues 165–167, D240, 246–247, A263, and K267; these read DAK and RK. Residue D240 coordinates L-methionine. L-methionine is bound at residue K271.

Belongs to the AdoMet synthase family. As to quaternary structure, homotetramer; dimer of dimers. Mg(2+) is required as a cofactor. It depends on K(+) as a cofactor.

Its subcellular location is the cytoplasm. The catalysed reaction is L-methionine + ATP + H2O = S-adenosyl-L-methionine + phosphate + diphosphate. It functions in the pathway amino-acid biosynthesis; S-adenosyl-L-methionine biosynthesis; S-adenosyl-L-methionine from L-methionine: step 1/1. In terms of biological role, catalyzes the formation of S-adenosylmethionine (AdoMet) from methionine and ATP. The overall synthetic reaction is composed of two sequential steps, AdoMet formation and the subsequent tripolyphosphate hydrolysis which occurs prior to release of AdoMet from the enzyme. The sequence is that of S-adenosylmethionine synthase from Francisella tularensis subsp. holarctica (strain FTNF002-00 / FTA).